The primary structure comprises 202 residues: FMN-dependent NADH:quinone oxidoreductase (202 aa).

Residues Ser-9, 15–17 (SAS), and 94–97 (MYNL) each bind FMN.

This sequence belongs to the azoreductase type 1 family. Homodimer. It depends on FMN as a cofactor.

The catalysed reaction is 2 a quinone + NADH + H(+) = 2 a 1,4-benzosemiquinone + NAD(+). It catalyses the reaction N,N-dimethyl-1,4-phenylenediamine + anthranilate + 2 NAD(+) = 2-(4-dimethylaminophenyl)diazenylbenzoate + 2 NADH + 2 H(+). Quinone reductase that provides resistance to thiol-specific stress caused by electrophilic quinones. Functionally, also exhibits azoreductase activity. Catalyzes the reductive cleavage of the azo bond in aromatic azo compounds to the corresponding amines. This Gluconobacter oxydans (strain 621H) (Gluconobacter suboxydans) protein is FMN-dependent NADH:quinone oxidoreductase.